The sequence spans 114 residues: Transmembrane protein 14B (114 aa).

Transmembrane regions (helical) follow at residues 8-28, 34-54, 60-80, and 83-103; these read LVPL…GGIV, GSVP…LGAY, PRNV…VMGM, and YYYG…LMAA.

Belongs to the TMEM14 family. In terms of assembly, interacts with IQGAP1; this interaction promotes phosphorylation and nuclear translocation of IQGAP1. Mainly expressed in the outer subventricular zone (OSVZ) of the fetal brains.

Its subcellular location is the membrane. Its function is as follows. Primate-specific protein involved in cortical expansion and folding in the developing neocortex. May drive neural progenitor proliferation through nuclear translocation of IQGAP1, which in turn promotes G1/S cell cycle transitions. The protein is Transmembrane protein 14B (TMEM14B) of Homo sapiens (Human).